The primary structure comprises 102 residues: NADH-quinone oxidoreductase subunit K (102 aa).

The next 3 membrane-spanning stretches (helical) occupy residues Leu-5–Leu-25, Ile-31–Phe-51, and Val-62–Leu-82.

The protein belongs to the complex I subunit 4L family. In terms of assembly, NDH-1 is composed of 14 different subunits. Subunits NuoA, H, J, K, L, M, N constitute the membrane sector of the complex.

The protein localises to the cell inner membrane. It catalyses the reaction a quinone + NADH + 5 H(+)(in) = a quinol + NAD(+) + 4 H(+)(out). Its function is as follows. NDH-1 shuttles electrons from NADH, via FMN and iron-sulfur (Fe-S) centers, to quinones in the respiratory chain. The immediate electron acceptor for the enzyme in this species is believed to be ubiquinone. Couples the redox reaction to proton translocation (for every two electrons transferred, four hydrogen ions are translocated across the cytoplasmic membrane), and thus conserves the redox energy in a proton gradient. This Bordetella parapertussis (strain 12822 / ATCC BAA-587 / NCTC 13253) protein is NADH-quinone oxidoreductase subunit K.